A 500-amino-acid chain; its full sequence is Galactose/methyl galactoside import ATP-binding protein MglA (500 aa).

ABC transporter domains are found at residues 8 to 243 and 257 to 500; these read LEME…VGRD and EMIL…AKYL. 40 to 47 is an ATP binding site; that stretch reads GENGAGKS.

Belongs to the ABC transporter superfamily. Galactose/methyl galactoside importer (TC 3.A.1.2.3) family. The complex is composed of one ATP-binding protein (MglA), two transmembrane proteins (MglC) and a solute-binding protein (MglB).

It is found in the cell inner membrane. The enzyme catalyses D-galactose(out) + ATP + H2O = D-galactose(in) + ADP + phosphate + H(+). The catalysed reaction is methyl beta-D-galactoside(out) + ATP + H2O = methyl beta-D-galactoside(in) + ADP + phosphate + H(+). Its function is as follows. Part of the ABC transporter complex MglABC involved in galactose/methyl galactoside import. Responsible for energy coupling to the transport system. This is Galactose/methyl galactoside import ATP-binding protein MglA from Fusobacterium nucleatum subsp. nucleatum (strain ATCC 25586 / DSM 15643 / BCRC 10681 / CIP 101130 / JCM 8532 / KCTC 2640 / LMG 13131 / VPI 4355).